The primary structure comprises 285 residues: 4-diphosphocytidyl-2-C-methyl-D-erythritol kinase (285 aa).

The active site involves lysine 12. ATP is bound at residue 95–105; that stretch reads PMGGGVGGGSS. Aspartate 137 is a catalytic residue.

The protein belongs to the GHMP kinase family. IspE subfamily.

It carries out the reaction 4-CDP-2-C-methyl-D-erythritol + ATP = 4-CDP-2-C-methyl-D-erythritol 2-phosphate + ADP + H(+). Its pathway is isoprenoid biosynthesis; isopentenyl diphosphate biosynthesis via DXP pathway; isopentenyl diphosphate from 1-deoxy-D-xylulose 5-phosphate: step 3/6. Its function is as follows. Catalyzes the phosphorylation of the position 2 hydroxy group of 4-diphosphocytidyl-2C-methyl-D-erythritol. This Actinobacillus pleuropneumoniae serotype 7 (strain AP76) protein is 4-diphosphocytidyl-2-C-methyl-D-erythritol kinase.